The following is a 533-amino-acid chain: Adenine deaminase (533 aa).

It belongs to the metallo-dependent hydrolases superfamily. Adenine deaminase family. Mn(2+) serves as cofactor.

It carries out the reaction adenine + H2O + H(+) = hypoxanthine + NH4(+). In Sulfurovum sp. (strain NBC37-1), this protein is Adenine deaminase.